The following is a 557-amino-acid chain: UvrABC system protein C (557 aa).

Residues 14-89 (EEPGVYIFKN…IKKYRPKYNV (76 aa)) enclose the GIY-YIG domain. In terms of domain architecture, UVR spans 194-229 (EEVFDYLKEKMETHSKMLDFENAAKYRDLLLNLSNV).

The protein belongs to the UvrC family. As to quaternary structure, interacts with UvrB in an incision complex.

It localises to the cytoplasm. Functionally, the UvrABC repair system catalyzes the recognition and processing of DNA lesions. UvrC both incises the 5' and 3' sides of the lesion. The N-terminal half is responsible for the 3' incision and the C-terminal half is responsible for the 5' incision. This is UvrABC system protein C from Thermotoga maritima (strain ATCC 43589 / DSM 3109 / JCM 10099 / NBRC 100826 / MSB8).